We begin with the raw amino-acid sequence, 213 residues long: Probable thiopurine S-methyltransferase (213 aa).

Residues W10, L45, E66, and R125 each coordinate S-adenosyl-L-methionine.

The protein belongs to the class I-like SAM-binding methyltransferase superfamily. TPMT family.

The protein localises to the cytoplasm. It catalyses the reaction S-adenosyl-L-methionine + a thiopurine = S-adenosyl-L-homocysteine + a thiopurine S-methylether.. This Yarrowia lipolytica (strain CLIB 122 / E 150) (Yeast) protein is Probable thiopurine S-methyltransferase.